The primary structure comprises 382 residues: Sphingoid long-chain base transporter RSB1 (382 aa).

The Extracellular portion of the chain corresponds to Met-1–Arg-34. Residues Asn-3 and Asn-6 are each glycosylated (N-linked (GlcNAc...) asparagine). A helical transmembrane segment spans residues Phe-35–Leu-55. Over Met-56–Arg-57 the chain is Cytoplasmic. Residues Gln-58–Gly-78 form a helical membrane-spanning segment. The Extracellular segment spans residues Arg-79–Asp-90. A helical transmembrane segment spans residues Ala-91–Tyr-111. At Tyr-112 to Ser-135 the chain is on the cytoplasmic side. Residues Phe-136–Cys-156 traverse the membrane as a helical segment. At Gly-157–His-171 the chain is on the extracellular side. A helical membrane pass occupies residues Val-172–Phe-192. Topologically, residues His-193–Arg-241 are cytoplasmic. Residues Trp-242–Cys-262 traverse the membrane as a helical segment. Topologically, residues Cys-263–Glu-281 are extracellular. The helical transmembrane segment at Trp-282 to Phe-302 threads the bilayer. Residues His-303–Leu-382 are Cytoplasmic-facing.

The protein belongs to the lipid-translocating exporter (LTE) (TC 9.A.26.1) family.

Its subcellular location is the cell membrane. In terms of biological role, catalyzes the ATP-dependent translocation of sphingoid long-chain bases (LCBs) from the cytoplasmic site toward the extracytoplasmic side of the membrane (flip-flop). Involved in the establishment of the functional lipid asymmetry of the plasma membrane. Regulates intracellular levels of LCBs, sphingolipid precursors that are growth inhibitory at increased levels. The protein is Sphingoid long-chain base transporter RSB1 (RSB1) of Saccharomyces cerevisiae (strain RM11-1a) (Baker's yeast).